The chain runs to 126 residues: 14 kDa phosphohistidine phosphatase (126 aa).

Lys-22 contributes to the substrate binding site. The active-site Proton acceptor is His-54. 95 to 97 (SMG) lines the substrate pocket.

The protein belongs to the janus family. As to quaternary structure, monomer.

It is found in the cytoplasm. It carries out the reaction N(pros)-phospho-L-histidyl-[protein] + H2O = L-histidyl-[protein] + phosphate. The enzyme catalyses N(tele)-phospho-L-histidyl-[protein] + H2O = L-histidyl-[protein] + phosphate. Exhibits phosphohistidine phosphatase activity. This chain is 14 kDa phosphohistidine phosphatase (PHPT1), found in Sus scrofa (Pig).